The chain runs to 431 residues: Signal recognition particle 54 kDa protein (431 aa).

GTP contacts are provided by residues 105 to 112 (GVEGSGKT), 185 to 189 (DTAGR), and 243 to 246 (TKMD).

This sequence belongs to the GTP-binding SRP family. SRP54 subfamily. Part of the signal recognition particle protein translocation system, which is composed of SRP and FtsY. Archaeal SRP consists of a 7S RNA molecule of 300 nucleotides and two protein subunits: SRP54 and SRP19.

Its subcellular location is the cytoplasm. It carries out the reaction GTP + H2O = GDP + phosphate + H(+). Functionally, involved in targeting and insertion of nascent membrane proteins into the cytoplasmic membrane. Binds to the hydrophobic signal sequence of the ribosome-nascent chain (RNC) as it emerges from the ribosomes. The SRP-RNC complex is then targeted to the cytoplasmic membrane where it interacts with the SRP receptor FtsY. In Pyrobaculum calidifontis (strain DSM 21063 / JCM 11548 / VA1), this protein is Signal recognition particle 54 kDa protein.